The primary structure comprises 140 residues: Putative 6-pyruvoyl tetrahydrobiopterin synthase (140 aa).

H19 provides a ligand contact to Zn(2+). Residue C38 is the Proton acceptor of the active site. 2 residues coordinate Zn(2+): H44 and H46. Residues H84 and E129 each act as charge relay system in the active site.

Belongs to the PTPS family. Homohexamer formed of two homotrimers in a head to head fashion. It depends on Zn(2+) as a cofactor.

It carries out the reaction 7,8-dihydroneopterin 3'-triphosphate = 6-pyruvoyl-5,6,7,8-tetrahydropterin + triphosphate + H(+). The protein operates within cofactor biosynthesis; tetrahydrobiopterin biosynthesis; tetrahydrobiopterin from 7,8-dihydroneopterin triphosphate: step 1/3. Its function is as follows. Involved in the biosynthesis of tetrahydrobiopterin, an essential cofactor of aromatic amino acid hydroxylases. Catalyzes the transformation of 7,8-dihydroneopterin triphosphate into 6-pyruvoyl tetrahydropterin. The sequence is that of Putative 6-pyruvoyl tetrahydrobiopterin synthase (ptps-1) from Caenorhabditis elegans.